Reading from the N-terminus, the 354-residue chain is S-adenosylmethionine:tRNA ribosyltransferase-isomerase (354 aa).

It belongs to the QueA family. As to quaternary structure, monomer.

Its subcellular location is the cytoplasm. The enzyme catalyses 7-aminomethyl-7-carbaguanosine(34) in tRNA + S-adenosyl-L-methionine = epoxyqueuosine(34) in tRNA + adenine + L-methionine + 2 H(+). It functions in the pathway tRNA modification; tRNA-queuosine biosynthesis. Functionally, transfers and isomerizes the ribose moiety from AdoMet to the 7-aminomethyl group of 7-deazaguanine (preQ1-tRNA) to give epoxyqueuosine (oQ-tRNA). The protein is S-adenosylmethionine:tRNA ribosyltransferase-isomerase of Pseudomonas fluorescens (strain ATCC BAA-477 / NRRL B-23932 / Pf-5).